The primary structure comprises 446 residues: Tubulin gamma chain (446 aa).

142–148 (AGGTGSG) is a binding site for GTP.

This sequence belongs to the tubulin family.

It is found in the cytoplasm. It localises to the cytoskeleton. The protein localises to the microtubule organizing center. The protein resides in the spindle pole body. Functionally, tubulin is the major constituent of microtubules. The gamma chain is found at microtubule organizing centers (MTOC) such as the spindle poles or the centrosome, suggesting that it is involved in the minus-end nucleation of microtubule assembly. The polypeptide is Tubulin gamma chain (tug1) (Schizosaccharomyces japonicus (Fission yeast)).